The chain runs to 225 residues: NAD(P)H-quinone oxidoreductase subunit K, chloroplastic (225 aa).

[4Fe-4S] cluster contacts are provided by Cys43, Cys44, Cys108, and Cys139.

The protein belongs to the complex I 20 kDa subunit family. NDH is composed of at least 16 different subunits, 5 of which are encoded in the nucleus. [4Fe-4S] cluster serves as cofactor.

Its subcellular location is the plastid. The protein localises to the chloroplast thylakoid membrane. It catalyses the reaction a plastoquinone + NADH + (n+1) H(+)(in) = a plastoquinol + NAD(+) + n H(+)(out). The catalysed reaction is a plastoquinone + NADPH + (n+1) H(+)(in) = a plastoquinol + NADP(+) + n H(+)(out). Functionally, NDH shuttles electrons from NAD(P)H:plastoquinone, via FMN and iron-sulfur (Fe-S) centers, to quinones in the photosynthetic chain and possibly in a chloroplast respiratory chain. The immediate electron acceptor for the enzyme in this species is believed to be plastoquinone. Couples the redox reaction to proton translocation, and thus conserves the redox energy in a proton gradient. The protein is NAD(P)H-quinone oxidoreductase subunit K, chloroplastic of Populus trichocarpa (Western balsam poplar).